Consider the following 894-residue polypeptide: Phosphoenolpyruvate carboxylase (894 aa).

Active-site residues include histidine 143 and lysine 556.

The protein belongs to the PEPCase type 1 family. It depends on Mg(2+) as a cofactor.

It carries out the reaction oxaloacetate + phosphate = phosphoenolpyruvate + hydrogencarbonate. Functionally, forms oxaloacetate, a four-carbon dicarboxylic acid source for the tricarboxylic acid cycle. This Acinetobacter baumannii (strain ATCC 17978 / DSM 105126 / CIP 53.77 / LMG 1025 / NCDC KC755 / 5377) protein is Phosphoenolpyruvate carboxylase.